The following is a 447-amino-acid chain: Probable glycine dehydrogenase (decarboxylating) subunit 1 (447 aa).

It belongs to the GcvP family. N-terminal subunit subfamily. The glycine cleavage system is composed of four proteins: P, T, L and H. In this organism, the P 'protein' is a heterodimer of two subunits.

The enzyme catalyses N(6)-[(R)-lipoyl]-L-lysyl-[glycine-cleavage complex H protein] + glycine + H(+) = N(6)-[(R)-S(8)-aminomethyldihydrolipoyl]-L-lysyl-[glycine-cleavage complex H protein] + CO2. Its function is as follows. The glycine cleavage system catalyzes the degradation of glycine. The P protein binds the alpha-amino group of glycine through its pyridoxal phosphate cofactor; CO(2) is released and the remaining methylamine moiety is then transferred to the lipoamide cofactor of the H protein. In Bacillus thuringiensis subsp. konkukian (strain 97-27), this protein is Probable glycine dehydrogenase (decarboxylating) subunit 1.